The primary structure comprises 249 residues: Exosome complex component Rrp41 (249 aa).

It belongs to the RNase PH family. Rrp41 subfamily. Component of the archaeal exosome complex. Forms a hexameric ring-like arrangement composed of 3 Rrp41-Rrp42 heterodimers. The hexameric ring associates with a trimer of Rrp4 and/or Csl4 subunits.

The protein localises to the cytoplasm. Its function is as follows. Catalytic component of the exosome, which is a complex involved in RNA degradation. Has 3'-&gt;5' exoribonuclease activity. Can also synthesize heteromeric RNA-tails. This is Exosome complex component Rrp41 from Pyrococcus horikoshii (strain ATCC 700860 / DSM 12428 / JCM 9974 / NBRC 100139 / OT-3).